Consider the following 402-residue polypeptide: Phosphopentomutase (402 aa).

Positions 10, 301, 306, 342, 343, and 354 each coordinate Mn(2+).

It belongs to the phosphopentomutase family. Mn(2+) serves as cofactor.

The protein resides in the cytoplasm. It carries out the reaction 2-deoxy-alpha-D-ribose 1-phosphate = 2-deoxy-D-ribose 5-phosphate. It catalyses the reaction alpha-D-ribose 1-phosphate = D-ribose 5-phosphate. It functions in the pathway carbohydrate degradation; 2-deoxy-D-ribose 1-phosphate degradation; D-glyceraldehyde 3-phosphate and acetaldehyde from 2-deoxy-alpha-D-ribose 1-phosphate: step 1/2. Functionally, isomerase that catalyzes the conversion of deoxy-ribose 1-phosphate (dRib-1-P) and ribose 1-phosphate (Rib-1-P) to deoxy-ribose 5-phosphate (dRib-5-P) and ribose 5-phosphate (Rib-5-P), respectively. This Aeromonas salmonicida (strain A449) protein is Phosphopentomutase.